Reading from the N-terminus, the 131-residue chain is Holo-[acyl-carrier-protein] synthase (131 aa).

Mg(2+) contacts are provided by Asp-8 and Glu-59.

Belongs to the P-Pant transferase superfamily. AcpS family. Mg(2+) is required as a cofactor.

It is found in the cytoplasm. The enzyme catalyses apo-[ACP] + CoA = holo-[ACP] + adenosine 3',5'-bisphosphate + H(+). Its function is as follows. Transfers the 4'-phosphopantetheine moiety from coenzyme A to a Ser of acyl-carrier-protein. In Rickettsia conorii (strain ATCC VR-613 / Malish 7), this protein is Holo-[acyl-carrier-protein] synthase.